The sequence spans 156 residues: Homeobox-leucine zipper protein ATHB-52 (156 aa).

The homeobox DNA-binding region spans 8–67 (GKNKKKRLTQDQVRQLEKCFTMNKKLEPDLKLQLSNQLGLPQRQVAVWFQNKRARFKTQS). The leucine-zipper stretch occupies residues 68-96 (LEVQHCTLQSKHEAALSDKAKLEHQVQFL).

It belongs to the HD-ZIP homeobox family. Class I subfamily. In terms of tissue distribution, expressed in roots and flowers.

The protein localises to the nucleus. Its function is as follows. Probable transcription factor. The sequence is that of Homeobox-leucine zipper protein ATHB-52 (ATHB-52) from Arabidopsis thaliana (Mouse-ear cress).